Reading from the N-terminus, the 227-residue chain is Transcription elongation factor A protein-like 2 (227 aa).

2 disordered regions span residues 1-145 and 202-227; these read MEKL…TNKG and FYPR…IPYV. Basic and acidic residues-rich tracts occupy residues 18 to 43, 50 to 82, 90 to 113, 120 to 136, and 206 to 227; these read IDNE…KLEN, TGKR…KGKS, TEGK…REPE, SETR…DIPR, and GPRE…IPYV.

Belongs to the TFS-II family. TFA subfamily.

The protein resides in the nucleus. Functionally, may be involved in transcriptional regulation. The polypeptide is Transcription elongation factor A protein-like 2 (TCEAL2) (Homo sapiens (Human)).